A 484-amino-acid chain; its full sequence is MAAGGNRDGEKRGSRSQADSGFLGLRPTSVDPALRRRRRGPRNKKRGWRRLAEEPLGLEVDQFLEDVRLQERTTGGLLAEAPNEKLFFVDTGFKRKEPRKKRTLVQKKSQRLQKPLRVDLALENHSKIPAPKDILAHQVPNAKKLRRKEELWEKLAKQGELPRDVRKAQARLLSPPTPKAKPGPQDIIERPFYDLWNPDNPLDTPLIGQDAFFLEQTKKKGVRRPQRLHIKPSQVPAVEVIPAGASYNPTFEDHQALLREAHEVELQREKEAEKLERQLALPTSEQAATQESVFREMCEGLLEESDGEDEHEAGRAGQPEAGDGTTEISPTGAAGPEKRMEKKTEQQRRREKAARKLRVQQAALRAARLQHQELFRLRGIKAQVARRLAELARRREQRRIRRLAEADKPRRLGRLKYQAPDIDVQLSSELSGSLRTLKPEGHILRDRFKSFQKRNMIEPRERAKFKRKYKVKLVEKRAYREIQL.

Disordered stretches follow at residues 1–51 (MAAG…WRRL) and 304–356 (ESDG…AARK). Ala-2 is subject to N-acetylalanine. Position 29 is a phosphoserine (Ser-29). Basic residues predominate over residues 35-49 (RRRRRGPRNKKRGWR). Positions 148–437 (KEELWEKLAK…SELSGSLRTL (290 aa)) are mediates interaction with CDKN2A/isoform tumor suppressor ARF. Ser-305 is subject to Phosphoserine. Residues 336–348 (PEKRMEKKTEQQR) show a composition bias toward basic and acidic residues. The tract at residues 348–392 (RRREKAARKLRVQQAALRAARLQHQELFRLRGIKAQVARRLAELA) is mediates interaction with human herpesvirus 8 protein ORF16. Nucleolar localization signal regions lie at residues 353-401 (AARK…RRIR) and 402-484 (RLAE…EIQL).

It belongs to the NOP53 family. As to quaternary structure, homooligomer. Interacts with PTEN; regulates PTEN phosphorylation and increases its stability. Interacts with RPL11; retains RPL11 into the nucleolus. Interacts with CDKN2A/isoform tumor suppressor ARF; the interaction is direct and promotes ARF nucleoplasmic relocalization and ubiquitin-mediated proteasomal degradation. Interacts with NPM1; the interaction is direct and competitive with MYC. Interacts with NF2 (via FERM domain); the interaction is direct. Interacts with p53/TP53 (via the oligomerization region); the interaction is direct and may prevent the MDM2-mediated proteasomal degradation of p53/TP53. Interacts with RIGI; may regulate RIGI through USP15-mediated 'Lys-63'-linked deubiquitination. Interacts with UBTF. Post-translationally, ubiquitin-mediated proteasomal degradation is regulated by c-JUN. It is associated with relocalization to the nucleoplasm and decreased homooligomerization. In terms of processing, phosphorylated upon DNA damage probably by ATM and DNA-PK; may regulate NOP53 degradation.

The protein localises to the nucleus. It localises to the nucleolus. Its subcellular location is the nucleoplasm. Its function is as follows. Nucleolar protein which is involved in the integration of the 5S RNP into the ribosomal large subunit during ribosome biogenesis. In ribosome biogenesis, may also play a role in rRNA transcription. Also functions as a nucleolar sensor that regulates the activation of p53/TP53 in response to ribosome biogenesis perturbation, DNA damage and other stress conditions. DNA damage or perturbation of ribosome biogenesis disrupt the interaction between NOP53 and RPL11 allowing RPL11 transport to the nucleoplasm where it can inhibit MDM2 and allow p53/TP53 activation. It may also positively regulate the function of p53/TP53 in cell cycle arrest and apoptosis through direct interaction, preventing its MDM2-dependent ubiquitin-mediated proteasomal degradation. Originally identified as a tumor suppressor, it may also play a role in cell proliferation and apoptosis by positively regulating the stability of PTEN, thereby antagonizing the PI3K-AKT/PKB signaling pathway. May also inhibit cell proliferation and increase apoptosis through its interaction with NF2. May negatively regulate NPM1 by regulating its nucleoplasmic localization, oligomerization and ubiquitin-mediated proteasomal degradation. Thereby, may prevent NPM1 interaction with MYC and negatively regulate transcription mediated by the MYC-NPM1 complex. May also regulate cellular aerobic respiration. In the cellular response to viral infection, may play a role in the attenuation of interferon-beta through the inhibition of RIGI. In Mus musculus (Mouse), this protein is Ribosome biogenesis protein NOP53.